A 237-amino-acid polypeptide reads, in one-letter code: Large ribosomal subunit protein uL3 (237 aa).

Disordered regions lie at residues alanine 133–lysine 155 and proline 213–glutamate 237. A compositionally biased stretch (polar residues) spans histidine 135–arginine 150. Glutamine 151 carries the N5-methylglutamine modification. Residues alanine 220 to glutamate 237 show a composition bias toward low complexity.

This sequence belongs to the universal ribosomal protein uL3 family. Part of the 50S ribosomal subunit. Forms a cluster with proteins L14 and L19. Post-translationally, methylated by PrmB.

Its function is as follows. One of the primary rRNA binding proteins, it binds directly near the 3'-end of the 23S rRNA, where it nucleates assembly of the 50S subunit. The sequence is that of Large ribosomal subunit protein uL3 from Brucella abortus (strain S19).